Reading from the N-terminus, the 377-residue chain is Histidinol-phosphate aminotransferase 2 (377 aa).

The tract at residues 17-44 is disordered; that stretch reads NLSPYVPGEQPQHDDLCKLNTNENPFPP. The residue at position 228 (Lys-228) is an N6-(pyridoxal phosphate)lysine.

It belongs to the class-II pyridoxal-phosphate-dependent aminotransferase family. Histidinol-phosphate aminotransferase subfamily. Homodimer. The cofactor is pyridoxal 5'-phosphate.

The catalysed reaction is L-histidinol phosphate + 2-oxoglutarate = 3-(imidazol-4-yl)-2-oxopropyl phosphate + L-glutamate. The protein operates within amino-acid biosynthesis; L-histidine biosynthesis; L-histidine from 5-phospho-alpha-D-ribose 1-diphosphate: step 7/9. The sequence is that of Histidinol-phosphate aminotransferase 2 from Psychrobacter arcticus (strain DSM 17307 / VKM B-2377 / 273-4).